The chain runs to 53 residues: Toxin CjTL7 (53 aa).

The N-terminal stretch at 1 to 22 is a signal peptide; the sequence is MMIKVLLLLSSALVLFTPEAEG. Trp-51 carries the post-translational modification Tryptophan amide.

Contains 4 disulfide bonds.

The protein localises to the secreted. It localises to the nematocyst. In vivo, only causes a weak change in behavior in shrimps (C.multidentata) (slight twitching of the walking legs), but no lethal effect is observed. No activity is observed when injected into fly larvae (M.domestica). The protein is Toxin CjTL7 of Epiactis japonica (Sea anemone).